The following is a 103-amino-acid chain: Small ribosomal subunit protein uS10 (103 aa).

It belongs to the universal ribosomal protein uS10 family. Part of the 30S ribosomal subunit.

Functionally, involved in the binding of tRNA to the ribosomes. The protein is Small ribosomal subunit protein uS10 of Xanthomonas campestris pv. campestris (strain B100).